A 146-amino-acid polypeptide reads, in one-letter code: uncharacterized protein (146 aa).

Residues 1–120 (MTDKFDANDE…TILKWEKNMD (120 aa)) form the N-acetyltransferase domain.

This sequence belongs to the acetyltransferase family.

This is an uncharacterized protein from Streptococcus pyogenes serotype M6 (strain ATCC BAA-946 / MGAS10394).